A 208-amino-acid chain; its full sequence is Small ribosomal subunit protein eS8 (208 aa).

The tract at residues 1–40 (MGISRDNWHKRRKTGGKRKPVHKKRKYELGRPPSNTKLGP) is disordered. Basic residues predominate over residues 8–26 (WHKRRKTGGKRKPVHKKRK).

Belongs to the eukaryotic ribosomal protein eS8 family. Component of the small ribosomal subunit.

The protein resides in the cytoplasm. Functionally, component of the small ribosomal subunit. The ribosome is a large ribonucleoprotein complex responsible for the synthesis of proteins in the cell. The protein is Small ribosomal subunit protein eS8 (rps8) of Ictalurus punctatus (Channel catfish).